A 531-amino-acid polypeptide reads, in one-letter code: Muscarinic acetylcholine receptor M5 (531 aa).

Over 1 to 28 the chain is Extracellular; sequence MEGESYNESTVNGTPVNHQALERHGLWE. N-linked (GlcNAc...) asparagine glycosylation occurs at Asn-7. The helical transmembrane segment at 29–52 threads the bilayer; the sequence is VITIAVVTAVVSLMTIVGNVLVMI. The Cytoplasmic portion of the chain corresponds to 53–65; the sequence is SFKVNSQLKTVNN. A helical membrane pass occupies residues 66–86; the sequence is YYLLSLACADLIIGIFSMNLY. Over 87–103 the chain is Extracellular; sequence TTYILMGRWVLGSLACD. Cys-102 and Cys-182 are joined by a disulfide. A helical membrane pass occupies residues 104–125; it reads LWLALDYVASNASVMNLLVISF. Over 126–145 the chain is Cytoplasmic; that stretch reads DRYFSITRPLTYRAKRTPKR. The chain crosses the membrane as a helical span at residues 146 to 168; the sequence is AGIMIGLAWLVSFILWAPAILCW. Residues 169-190 lie on the Extracellular side of the membrane; sequence QYLVGKRTVPPDECQIQFLSEP. Residues 191–213 form a helical membrane-spanning segment; sequence TITFGTAIAAFYIPVSVMTILYC. The Cytoplasmic portion of the chain corresponds to 214–442; that stretch reads RIYRETEKRT…LVKERKAAQT (229 aa). 2 disordered regions span residues 259-295 and 327-346; these read SLAQ…DWEK and EAKE…ETVV. Residues 267–287 are compositionally biased toward low complexity; it reads QASWSSSRRSTSTTGKTTQAT. A compositionally biased stretch (polar residues) spans 334-346; that stretch reads KESNTQETKETVV. The chain crosses the membrane as a helical span at residues 443 to 463; that stretch reads LSAILLAFIITWTPYNIMVLV. Residues 464-477 are Extracellular-facing; sequence STFCDKCVPVTLWH. A helical transmembrane segment spans residues 478-497; it reads LGYWLCYVNSTINPICYALC. The Cytoplasmic portion of the chain corresponds to 498-531; sequence NRTFRKTFKLLLLCRWKKKKVEEKLYWQGNSKLP. Phosphothreonine is present on residues Thr-500 and Thr-504.

It belongs to the G-protein coupled receptor 1 family. Muscarinic acetylcholine receptor subfamily. CHRM5 sub-subfamily.

It is found in the cell membrane. It localises to the postsynaptic cell membrane. Functionally, the muscarinic acetylcholine receptor mediates various cellular responses, including inhibition of adenylate cyclase, breakdown of phosphoinositides and modulation of potassium channels through the action of G proteins. Primary transducing effect is Pi turnover. The protein is Muscarinic acetylcholine receptor M5 (Chrm5) of Rattus norvegicus (Rat).